The chain runs to 333 residues: MLLPSKKDLKTALDVFAVFQWSFSALLITTTVIAVNLYLVVFTPYWPVTVLILTWLAFDWKTPQRGGRRFTCVRHWRLWKHYSDYFPLKLLKTHDICPSRNYILVCHPHGLFAHGWFGHFATEASGFSKIFPGITPYILTLGAFFWMPFLREYVMSTGACSVSRSSIDFLLTHKGTGNMVIVVIGGLAECRYSLPGSSTLVLKNRSGFVRMALQHGVPLIPAYAFGETDLYDQHIFTPGGFVNRFQKWFQSMVHIYPCAFYGRGFTKNSWGLLPYSRPVTTIVGEPLPMPKIENPSQEIVAKYHTLYIDALRKLFDQHKTKFGISETQELEII.

3 helical membrane-spanning segments follow: residues 15–35 (VFAVFQWSFSALLITTTVIAV), 38–58 (YLVVFTPYWPVTVLILTWLAF), and 130–150 (IFPGITPYILTLGAFFWMPFL).

Belongs to the diacylglycerol acyltransferase family. Monomer. In terms of tissue distribution, highly expressed in skin, where it is primarily restricted to undifferentiated peripheral sebocytes. Also expressed at lower level in other tissues except pancreas.

It is found in the endoplasmic reticulum membrane. It catalyses the reaction a long chain fatty alcohol + a fatty acyl-CoA = a wax ester + CoA. It carries out the reaction all-trans-retinol + an acyl-CoA = an all-trans-retinyl ester + CoA. The enzyme catalyses an acyl-CoA + a 1,2-diacyl-sn-glycerol = a triacyl-sn-glycerol + CoA. The catalysed reaction is 11-cis-retinol + a fatty acyl-CoA = 11-cis-retinyl ester + CoA. It catalyses the reaction 9-cis-retinol + a fatty acyl-CoA = 9-cis-retinyl ester + CoA. It carries out the reaction 13-cis-retinol + a fatty acyl-CoA = 13-cis-retinyl ester + CoA. The enzyme catalyses a 1-acylglycerol + an acyl-CoA = a 1,2-diacylglycerol + CoA. The catalysed reaction is 1-O-alkylglycerol + an acyl-CoA = 1-O-alkyl-3-acylglycerol + CoA. It catalyses the reaction a 2-acylglycerol + an acyl-CoA = a 1,2-diacyl-sn-glycerol + CoA. It carries out the reaction 2-(9Z-octadecenoyl)-glycerol + hexadecanoyl-CoA = 1-hexadecanoyl-2-(9Z-octadecenoyl)-sn-glycerol + CoA. The enzyme catalyses 1,2-di-(9Z-octadecenoyl)-sn-glycerol + hexadecanoyl-CoA = 1,2-di-(9Z)-octadecenoyl-3-hexadecanoyl-sn-glycerol + CoA. The catalysed reaction is hexadecan-1-ol + hexadecanoyl-CoA = hexadecanyl hexadecanoate + CoA. It catalyses the reaction hexadecane-1,2-diol + hexadecanoyl-CoA = 2-hydroxyhexadecyl hexadecanoate + CoA. It carries out the reaction 9-cis-retinol + hexadecanoyl-CoA = 9-cis-retinyl hexadecanoate + CoA. The enzyme catalyses all-trans-retinol + hexadecanoyl-CoA = all-trans-retinyl hexadecanoate + CoA. The catalysed reaction is 1,2-di-(9Z-octadecenoyl)-sn-glycerol + (9Z)-octadecenoyl-CoA = 1,2,3-tri-(9Z-octadecenoyl)-glycerol + CoA. It catalyses the reaction hexadecan-1-ol + (9Z)-octadecenoyl-CoA = hexadecanyl (9Z)-octadecenoate + CoA. It carries out the reaction (9Z)-hexadecen-1-ol + (9Z)-octadecenoyl-CoA = 1-O-(9Z)-hexadecenyl (9Z)-octadecenoate + CoA. The enzyme catalyses octadecan-1-ol + (9Z)-octadecenoyl-CoA = 1-O-octadecyl (9Z)-octadecenoate + CoA. The catalysed reaction is (9Z)-octadecen-1-ol + (9Z)-octadecenoyl-CoA = 1-O-(9Z)-octadecenyl (9Z)-octadecenoate + CoA. It catalyses the reaction hexadecan-1-ol + (9Z)-hexadecenoyl-CoA = 1-O-hexadecyl (9Z)-hexadecenoate + CoA. It carries out the reaction hexadecan-1-ol + octadecanoyl-CoA = hexadecanyl octadecanoate + CoA. The enzyme catalyses 11-cis-retinol + hexadecanoyl-CoA = 11-cis-retinyl hexadecanoate + CoA. The catalysed reaction is 1-O-(9Z-octadecenyl)-glycerol + (9Z)-octadecenoyl-CoA = 1-O-(9Z-octadecyl)-3-(9Z-octadecenoyl)-glycerol + CoA. It catalyses the reaction 1-(9Z-octadecenoyl)-glycerol + (9Z)-octadecenoyl-CoA = 1,2-di-(9Z-octadecenoyl)-glycerol + CoA. It carries out the reaction 11-cis-retinol + tetradecanoyl-CoA = 11-cis-retinyl tetradecanoate + CoA. The enzyme catalyses 9-cis-retinol + tetradecanoyl-CoA = 9-cis-retinyl tetradecanoate + CoA. The catalysed reaction is 13-cis-retinol + tetradecanoyl-CoA = 13-cis-retinyl tetradecanoate + CoA. It catalyses the reaction all-trans-retinol + tetradecanoyl-CoA = all-trans-retinyl tetradecanoate + CoA. It carries out the reaction tetradecan-1-ol + tetradecanoyl-CoA = tetradecanyl tetradecanoate + CoA. 11-cis retinoids act as allosteric modulators of acyl-CoA retinol O-fatty-acyltransferase (ARAT) activity by suppressing esterification of 9-cis, 13-cis, or all-trans retinols concurrently increasing the enzyme specificity toward 11-cis isomer. In terms of biological role, acyltransferase that catalyzes the formation of ester bonds between fatty alcohols and fatty acyl-CoAs to form wax monoesters. Shows a preference for medium chain acyl-CoAs from C12 to C16 in length and fatty alcohols shorter than C20, as the acyl donors and acceptors, respectively. Also possesses acyl-CoA retinol acyltransferase (ARAT) activity that preferentially esterifies 11-cis-retinol, a chromophore precursor of bleached opsin pigments in cone cells. Shows higher catalytic efficiency toward 11-cis-retinol versus 9-cis-retinol, 13-cis-retinol, and all-trans-retinol substrates. The protein is Acyl-CoA wax alcohol acyltransferase 2 (AWAT2) of Homo sapiens (Human).